The primary structure comprises 300 residues: Homoserine kinase (300 aa).

Residue 86 to 96 (PVARGLGSSAT) coordinates ATP.

It belongs to the GHMP kinase family. Homoserine kinase subfamily.

It is found in the cytoplasm. It catalyses the reaction L-homoserine + ATP = O-phospho-L-homoserine + ADP + H(+). The protein operates within amino-acid biosynthesis; L-threonine biosynthesis; L-threonine from L-aspartate: step 4/5. In terms of biological role, catalyzes the ATP-dependent phosphorylation of L-homoserine to L-homoserine phosphate. In Persephonella marina (strain DSM 14350 / EX-H1), this protein is Homoserine kinase.